Here is a 406-residue protein sequence, read N- to C-terminus: 8-amino-7-oxononanoate synthase (406 aa).

Arginine 21 contributes to the substrate binding site. Residue 112-113 (GY) coordinates pyridoxal 5'-phosphate. Residue histidine 137 coordinates substrate. Residues serine 183, histidine 211, and threonine 239 each coordinate pyridoxal 5'-phosphate. The residue at position 242 (lysine 242) is an N6-(pyridoxal phosphate)lysine. A substrate-binding site is contributed by threonine 358.

It belongs to the class-II pyridoxal-phosphate-dependent aminotransferase family. BioF subfamily. In terms of assembly, homodimer. Pyridoxal 5'-phosphate is required as a cofactor.

The enzyme catalyses 6-carboxyhexanoyl-[ACP] + L-alanine + H(+) = (8S)-8-amino-7-oxononanoate + holo-[ACP] + CO2. It participates in cofactor biosynthesis; biotin biosynthesis. Functionally, catalyzes the decarboxylative condensation of pimeloyl-[acyl-carrier protein] and L-alanine to produce 8-amino-7-oxononanoate (AON), [acyl-carrier protein], and carbon dioxide. The polypeptide is 8-amino-7-oxononanoate synthase (Burkholderia cenocepacia (strain HI2424)).